Here is a 251-residue protein sequence, read N- to C-terminus: Probable transcriptional regulatory protein MRA_2631 (251 aa).

This sequence belongs to the TACO1 family.

It is found in the cytoplasm. This is Probable transcriptional regulatory protein MRA_2631 from Mycobacterium tuberculosis (strain ATCC 25177 / H37Ra).